The primary structure comprises 213 residues: Pyrrolidone-carboxylate peptidase (213 aa).

Residues E78, C141, and H165 contribute to the active site.

Belongs to the peptidase C15 family. Homotetramer.

It localises to the cytoplasm. The enzyme catalyses Release of an N-terminal pyroglutamyl group from a polypeptide, the second amino acid generally not being Pro.. In terms of biological role, removes 5-oxoproline from various penultimate amino acid residues except L-proline. The polypeptide is Pyrrolidone-carboxylate peptidase (Clostridium botulinum (strain Alaska E43 / Type E3)).